A 495-amino-acid polypeptide reads, in one-letter code: Histidine--tRNA ligase (495 aa).

Polar residues predominate over residues 1 to 10; sequence MTTDSEQPNT. The disordered stretch occupies residues 1-24; the sequence is MTTDSEQPNTDFRPEARAPRGFAD. The span at 12–24 shows a compositional bias: basic and acidic residues; sequence FRPEARAPRGFAD.

It belongs to the class-II aminoacyl-tRNA synthetase family. Homodimer.

It localises to the cytoplasm. It carries out the reaction tRNA(His) + L-histidine + ATP = L-histidyl-tRNA(His) + AMP + diphosphate + H(+). The chain is Histidine--tRNA ligase (hisS) from Caulobacter vibrioides (strain ATCC 19089 / CIP 103742 / CB 15) (Caulobacter crescentus).